The following is a 173-amino-acid chain: N-alpha-acetyltransferase 20 (173 aa).

Residues 2 to 151 form the N-acetyltransferase domain; it reads TTIRRFVCDD…DALDMRKALP (150 aa).

It belongs to the acetyltransferase family. ARD1 subfamily.

In terms of biological role, seems to be involved in N-acetylation. This is N-alpha-acetyltransferase 20 (nat5) from Dictyostelium discoideum (Social amoeba).